Consider the following 842-residue polypeptide: Follistatin-related protein 4 (842 aa).

Residues 1–22 form the signal peptide; sequence MKPGGFWLHLTLLGASLPAALG. The Kazal-like domain maps to 81-135; it reads KTGEPECQCLEACRPSYVPVCGSDGRFYENHCKLHRAACLLGKRITVIHSKDCFL. 3 disulfides stabilise this stretch: C87–C119, C93–C112, and C101–C133. Positions 174–209 constitute an EF-hand domain; the sequence is QKRLLVESLFRDLDADGNGHLSSSELAQHVLKKQDL. Positions 187, 189, 191, 193, and 198 each coordinate Ca(2+). 2 Ig-like domains span residues 251-338 and 341-426; these read PEDR…LQVN and PVIR…EDIS. Disulfide bonds link C270–C321 and C362–C413. N318 carries an N-linked (GlcNAc...) asparagine glycan.

It localises to the secreted. This chain is Follistatin-related protein 4 (FSTL4), found in Homo sapiens (Human).